Reading from the N-terminus, the 246-residue chain is Protein 3F (246 aa).

The first 19 residues, 1–19, serve as a signal peptide directing secretion; it reads MKLLSKLILTLALATYASA. N52 carries N-linked (GlcNAc...) asparagine glycosylation. Residues 113–124 show a composition bias toward basic and acidic residues; that stretch reads EVRPIDRLKDNA. Residues 113-223 are disordered; that stretch reads EVRPIDRLKD…EEAEHVEKGA (111 aa). Residues 126-145 show a composition bias toward polar residues; sequence AANTENAQKSPNTQSTQKGS. Repeat copies occupy residues 145-153, 154-162, and 163-171. Positions 145–176 are 3.5 X 9 AA tandem repeats of S-P-K-[ST]-D-A-K-E-A; it reads SPKSDAKEASPKTDAKEASPKSDAKEASPKTD. The segment covering 146–177 has biased composition (basic and acidic residues); it reads PKSDAKEASPKTDAKEASPKSDAKEASPKTDT. The stretch at 172 to 176 is one 4; truncated repeat; sequence SPKTD. A compositionally biased stretch (low complexity) spans 181–213; it reads SSPKTDTKSSTQKPSSSSDSSKAKAEANTAANN.

The sequence is that of Protein 3F (pspG) from Dictyostelium discoideum (Social amoeba).